The following is a 660-amino-acid chain: Putative ABC transporter ATP-binding MG390 (660 aa).

Positions 6-126 (QEQQNECGIC…KLWTGYAATV (121 aa)) constitute a Peptidase C39 domain. Residue Cys-12 is part of the active site. Helical transmembrane passes span 150 to 170 (LVTFYVFIELIIIGISTLLAT), 188 to 208 (LVVLVVYFSCLKGLNLLLQVI), 265 to 285 (YIPNLIISCVVALIIGVLIGI), 290 to 310 (FLLIAIAQIVVNAGLFCYDFF), 379 to 399 (SFFQQGFDFAILGLGVIGIIE), and 402 to 422 (YQLSFLFYVFGIQSLFSTYAT). Residues 464–657 (ISLENLSVTL…QNKINLTNYL (194 aa)) form the ABC transporter domain. 494–501 (GQNGSGKS) contacts ATP.

It belongs to the ABC transporter superfamily.

Its subcellular location is the cell membrane. The protein is Putative ABC transporter ATP-binding MG390 of Mycoplasma genitalium (strain ATCC 33530 / DSM 19775 / NCTC 10195 / G37) (Mycoplasmoides genitalium).